The sequence spans 86 residues: Cerebrin prohormone (86 aa).

The N-terminal stretch at 1–27 is a signal peptide; the sequence is MFGYRSLLVLLVTLSLCLLLQSSHCSA. The propeptide occupies 28-64; the sequence is VRTYGNDLDARARREIISLAARLIKLSMYGPEDDSFV. I83 is modified (isoleucine amide).

In terms of tissue distribution, expressed only in cerebral ganglion.

The protein localises to the secreted. In terms of biological role, may function as a hormone and may play a neuromodulatory role. This chain is Cerebrin prohormone (CBPH), found in Aplysia californica (California sea hare).